A 153-amino-acid polypeptide reads, in one-letter code: MSIELDLQIACENENGLPSEKDLMTWLNAVIPQFQPQAELTIRIVDEKESHELNHEYRGKDKPTNVLSFPFEAPPGLELDLLGDLIICRQVVEEEAIEQNKPLLAHWAHMVVHGSLHLLGYDHIEDDEAEEMESLETELMQGMGFEDPYIAEK.

Zn(2+) is bound by residues H113, H117, and H123.

The protein belongs to the endoribonuclease YbeY family. Requires Zn(2+) as cofactor.

Its subcellular location is the cytoplasm. Functionally, single strand-specific metallo-endoribonuclease involved in late-stage 70S ribosome quality control and in maturation of the 3' terminus of the 16S rRNA. The protein is Endoribonuclease YbeY of Aliivibrio fischeri (strain MJ11) (Vibrio fischeri).